The sequence spans 403 residues: Calcium-responsive transactivator (403 aa).

Residues 1–148 (MSVAFASARP…TLPTTTMSMA (148 aa)) form an N-terminal auto-inhibitory domain region. Positions 50 to 53 (YQQI) match the SH2-binding motif. Disordered stretches follow at residues 72-111 (QSLLPAPPTQNMNLGPGGMSQTGPSQTLHSQGNLSEALGS), 152-171 (HGSAPGYSHTVPSSQNVPMQ), 224-303 (NQSS…RTFE), and 318-403 (SQQQ…NYQQ). Composition is skewed to polar residues over residues 92-105 (QTGPSQTLHSQGNL) and 161-171 (TVPSSQNVPMQ). The segment at 149–238 (VSTHGSAPGY…GSSMMGQRPL (90 aa)) is methionine-rich intra-molecular domain. Low complexity predominate over residues 224–235 (NQSSQGSSMMGQ). Residues 252 to 324 (YLGQEEYYSE…AQYSQQQTGY (73 aa)) form an MFD domain region. Over residues 263 to 277 (YGHSQGSSEAMTPQY) the composition is skewed to polar residues. Low complexity predominate over residues 286–296 (YSYQQSSYGEQ). The interval 341–403 (NQQNYPGQQQ…EQGQYGNYQQ (63 aa)) is necessary for nuclear localization. The SH2-binding signature appears at 360–363 (SQYS). The short motif at 378–386 (TSQTTSTAQ) is the SH3-binding element. The short motif at 398–401 (YGNY) is the SH2-binding element.

The protein belongs to the SS18 family. In terms of assembly, homodimer.

It localises to the nucleus. In terms of biological role, transcriptional activator which may be required for calcium-dependent dendritic growth and branching in cortical neurons. The protein is Calcium-responsive transactivator (ss18l1) of Xenopus laevis (African clawed frog).